A 774-amino-acid polypeptide reads, in one-letter code: Phosphoribosylformylglycinamidine synthase subunit PurL (774 aa).

His-51 is an active-site residue. Residues Tyr-54 and Lys-93 each contribute to the ATP site. Glu-95 contributes to the Mg(2+) binding site. Substrate is bound by residues 96 to 99 and Arg-118; that span reads SHNH. His-97 functions as the Proton acceptor in the catalytic mechanism. Mg(2+) is bound at residue Asp-119. Position 242 (Gln-242) interacts with substrate. Residue Asp-270 coordinates Mg(2+). 314–316 lines the substrate pocket; that stretch reads ESQ. 2 residues coordinate ATP: Asp-514 and Gly-551. Position 552 (Asn-552) interacts with Mg(2+). Residue Ser-554 participates in substrate binding.

It belongs to the FGAMS family. As to quaternary structure, monomer. Part of the FGAM synthase complex composed of 1 PurL, 1 PurQ and 2 PurS subunits.

It is found in the cytoplasm. It carries out the reaction N(2)-formyl-N(1)-(5-phospho-beta-D-ribosyl)glycinamide + L-glutamine + ATP + H2O = 2-formamido-N(1)-(5-O-phospho-beta-D-ribosyl)acetamidine + L-glutamate + ADP + phosphate + H(+). It participates in purine metabolism; IMP biosynthesis via de novo pathway; 5-amino-1-(5-phospho-D-ribosyl)imidazole from N(2)-formyl-N(1)-(5-phospho-D-ribosyl)glycinamide: step 1/2. Its function is as follows. Part of the phosphoribosylformylglycinamidine synthase complex involved in the purines biosynthetic pathway. Catalyzes the ATP-dependent conversion of formylglycinamide ribonucleotide (FGAR) and glutamine to yield formylglycinamidine ribonucleotide (FGAM) and glutamate. The FGAM synthase complex is composed of three subunits. PurQ produces an ammonia molecule by converting glutamine to glutamate. PurL transfers the ammonia molecule to FGAR to form FGAM in an ATP-dependent manner. PurS interacts with PurQ and PurL and is thought to assist in the transfer of the ammonia molecule from PurQ to PurL. The polypeptide is Phosphoribosylformylglycinamidine synthase subunit PurL (Gloeobacter violaceus (strain ATCC 29082 / PCC 7421)).